The following is a 32-amino-acid chain: Dermatoxin-J3 (32 aa).

Glutamine amide is present on Q32.

As to expression, expressed by the skin glands.

It localises to the secreted. Antimicrobial peptide. This chain is Dermatoxin-J3, found in Phasmahyla jandaia (Jandaia leaf frog).